A 255-amino-acid chain; its full sequence is 3-deoxy-manno-octulosonate cytidylyltransferase (255 aa).

This sequence belongs to the KdsB family.

Its subcellular location is the cytoplasm. It carries out the reaction 3-deoxy-alpha-D-manno-oct-2-ulosonate + CTP = CMP-3-deoxy-beta-D-manno-octulosonate + diphosphate. It functions in the pathway nucleotide-sugar biosynthesis; CMP-3-deoxy-D-manno-octulosonate biosynthesis; CMP-3-deoxy-D-manno-octulosonate from 3-deoxy-D-manno-octulosonate and CTP: step 1/1. The protein operates within bacterial outer membrane biogenesis; lipopolysaccharide biosynthesis. Activates KDO (a required 8-carbon sugar) for incorporation into bacterial lipopolysaccharide in Gram-negative bacteria. The protein is 3-deoxy-manno-octulosonate cytidylyltransferase of Hahella chejuensis (strain KCTC 2396).